The following is a 237-amino-acid chain: Sugar fermentation stimulation protein homolog (237 aa).

It belongs to the SfsA family.

The sequence is that of Sugar fermentation stimulation protein homolog from Azorhizobium caulinodans (strain ATCC 43989 / DSM 5975 / JCM 20966 / LMG 6465 / NBRC 14845 / NCIMB 13405 / ORS 571).